The chain runs to 274 residues: Undecaprenyl-diphosphatase 1 (274 aa).

The next 8 membrane-spanning stretches (helical) occupy residues 4–24, 45–65, 84–104, 111–131, 146–166, 186–206, 217–237, and 249–269; these read LLLL…FLPI, SAVF…YEYW, HLAI…LSFG, LFND…IMWI, IGLK…IPGT, ATEF…LLDL, FDWS…LLLI, and FMVF…FAYT.

The protein belongs to the UppP family.

Its subcellular location is the cell inner membrane. It carries out the reaction di-trans,octa-cis-undecaprenyl diphosphate + H2O = di-trans,octa-cis-undecaprenyl phosphate + phosphate + H(+). Its function is as follows. Catalyzes the dephosphorylation of undecaprenyl diphosphate (UPP). Confers resistance to bacitracin. The protein is Undecaprenyl-diphosphatase 1 of Acinetobacter baylyi (strain ATCC 33305 / BD413 / ADP1).